A 360-amino-acid polypeptide reads, in one-letter code: C-C chemokine receptor type 2 (360 aa).

The Extracellular segment spans residues Met1–Ala42. An N-linked (GlcNAc...) asparagine glycan is attached at Asn14. Sulfotyrosine is present on Tyr26. A helical transmembrane segment spans residues Gln43–Cys70. The Cytoplasmic segment spans residues Lys71 to Tyr80. Residues Leu81 to His100 form a helical membrane-spanning segment. The Extracellular portion of the chain corresponds to Ser101–Lys114. Cys113 and Cys190 are disulfide-bonded. A helical transmembrane segment spans residues Leu115–Ile136. The Cytoplasmic segment spans residues Asp137–Thr153. The residue at position 139 (Tyr139) is a Phosphotyrosine; by JAK2. The helical transmembrane segment at Val154–Phe178 threads the bilayer. At Thr179–Arg206 the chain is on the extracellular side. The chain crosses the membrane as a helical span at residues Asn207–Leu226. Residues Lys227–Arg243 are Cytoplasmic-facing. The chain crosses the membrane as a helical span at residues Leu244–Phe268. Over Gln269–Gln285 the chain is Extracellular. Residues Ala286–Gly309 form a helical membrane-spanning segment. Residues Glu310 to Leu360 lie on the Cytoplasmic side of the membrane.

This sequence belongs to the G-protein coupled receptor 1 family. Interacts with ARRB1. Interacts (via extracellular N-terminal region) with beta-defensin DEFB106A/DEFB106B; this interaction may preferentially require specific tyrosine sulfation on CCR2. Interacts with NUP85; the interaction is required for CCR2 clusters formation on the cell membrane and CCR2 signaling. N-glycosylated. Post-translationally, sulfation increases the affinity for both monomeric and dimeric CCL2 with stronger binding to the monomeric form. Binding of sulfated CCR2 to CCL2 promotes conversion of CCL2 from dimer to monomer.

Its subcellular location is the cell membrane. Functionally, key functional receptor for CCL2 but can also bind CCL7 and CCL12. Its binding with CCL2 on monocytes and macrophages mediates chemotaxis and migration induction through the activation of the PI3K cascade, the small G protein Rac and lamellipodium protrusion. Also acts as a receptor for the beta-defensin DEFB106A/DEFB106B. Regulates the expression of T-cell inflammatory cytokines and T-cell differentiation, promoting the differentiation of T-cells into T-helper 17 cells (Th17) during inflammation. Facilitates the export of mature thymocytes by enhancing directional movement of thymocytes to sphingosine-1-phosphate stimulation and up-regulation of S1P1R expression; signals through the JAK-STAT pathway to regulate FOXO1 activity leading to an increased expression of S1P1R. Plays an important role in mediating peripheral nerve injury-induced neuropathic pain. Increases NMDA-mediated synaptic transmission in both dopamine D1 and D2 receptor-containing neurons, which may be caused by MAPK/ERK-dependent phosphorylation of GRIN2B/NMDAR2B. Mediates the recruitment of macrophages and monocytes to the injury site following brain injury. This Macaca mulatta (Rhesus macaque) protein is C-C chemokine receptor type 2 (CCR2).